The chain runs to 371 residues: N-methyl-L-tryptophan oxidase (371 aa).

4–34 contributes to the FAD binding site; that stretch reads DLIVIGSGSVGSAAGYYASQAGLNVLMIDSA. S-8alpha-FAD cysteine is present on Cys307.

Belongs to the MSOX/MTOX family. MTOX subfamily. As to quaternary structure, monomer. FAD serves as cofactor.

The enzyme catalyses N(alpha)-methyl-L-tryptophan + O2 + H2O = L-tryptophan + formaldehyde + H2O2. Its function is as follows. Catalyzes the oxidative demethylation of N-methyl-L-tryptophan. This Yersinia pseudotuberculosis serotype O:1b (strain IP 31758) protein is N-methyl-L-tryptophan oxidase.